Reading from the N-terminus, the 315-residue chain is Malate dehydrogenase (315 aa).

Residues 7–12 and D32 contribute to the NAD(+) site; that span reads GAGNIG. Positions 81 and 87 each coordinate substrate. NAD(+)-binding positions include N94 and 117 to 119; that span reads VTN. Residues N119 and R150 each coordinate substrate. H174 acts as the Proton acceptor in catalysis.

The protein belongs to the LDH/MDH superfamily. MDH type 3 family.

The enzyme catalyses (S)-malate + NAD(+) = oxaloacetate + NADH + H(+). Functionally, catalyzes the reversible oxidation of malate to oxaloacetate. The chain is Malate dehydrogenase from Neorickettsia sennetsu (strain ATCC VR-367 / Miyayama) (Ehrlichia sennetsu).